The following is a 318-amino-acid chain: Homoserine kinase (318 aa).

97-107 (PIGSGLGSSAC) provides a ligand contact to ATP.

This sequence belongs to the GHMP kinase family. Homoserine kinase subfamily.

The protein resides in the cytoplasm. The catalysed reaction is L-homoserine + ATP = O-phospho-L-homoserine + ADP + H(+). It functions in the pathway amino-acid biosynthesis; L-threonine biosynthesis; L-threonine from L-aspartate: step 4/5. In terms of biological role, catalyzes the ATP-dependent phosphorylation of L-homoserine to L-homoserine phosphate. The protein is Homoserine kinase of Aliivibrio salmonicida (strain LFI1238) (Vibrio salmonicida (strain LFI1238)).